We begin with the raw amino-acid sequence, 233 residues long: Pirin-like protein YhaK (233 aa).

The protein belongs to the pirin family. Monomer.

It localises to the cytoplasm. Functionally, does not have quercetin 2,3-dioxygenase activity. This is Pirin-like protein YhaK (yhaK) from Escherichia coli (strain K12).